The following is a 480-amino-acid chain: MTLSFTARWRDELPATYTALLPTPLKNARLIWYNDKLAQQLAIPASLFDATNGAGVWGGETLLPGMSPVAQVYSGHQFGVWAGQLGDGRGILLGEQLLADGSTLDWHLKGAGLTPYSRMGDGRAVLRSTIRESLASEAMHYLGIPTTRALSIVASDTPVQRETQETGAMLMRLAQSHMRFGHFEHFYYRREPEKVQQLADFAIRHYWPQWQDVAEKYALWFEEVAARTGRLIAEWQTVGFAHGVMNTDNMSILGLTIDYGPFGFLDDYDPGFIGNHSDHQGRYRFDNQPSVALWNLQRLAQTLTPFIEIDALNRALDRYQDALLTHYGQRMRQKLGFFTEQKDDNALLNELFSLMAREGSDYTRTFRMLSHTEQQSASSPLRDTFIDRAAFDAWFDHYRARLRTEAVDDALRQQQMQRVNPAIVLRNWLAQRAIDAAEQGDMAELHRLHEVLRQPFTDRDDDYASRPPEWGKRLEVSCSS.

ATP-binding residues include glycine 86, glycine 88, arginine 89, lysine 109, aspartate 121, glycine 122, arginine 172, and arginine 179. Aspartate 248 acts as the Proton acceptor in catalysis. Mg(2+) is bound by residues asparagine 249 and aspartate 258. An ATP-binding site is contributed by aspartate 258.

It belongs to the SELO family. The cofactor is Mg(2+). Requires Mn(2+) as cofactor.

It catalyses the reaction L-seryl-[protein] + ATP = 3-O-(5'-adenylyl)-L-seryl-[protein] + diphosphate. It carries out the reaction L-threonyl-[protein] + ATP = 3-O-(5'-adenylyl)-L-threonyl-[protein] + diphosphate. The enzyme catalyses L-tyrosyl-[protein] + ATP = O-(5'-adenylyl)-L-tyrosyl-[protein] + diphosphate. The catalysed reaction is L-histidyl-[protein] + UTP = N(tele)-(5'-uridylyl)-L-histidyl-[protein] + diphosphate. It catalyses the reaction L-seryl-[protein] + UTP = O-(5'-uridylyl)-L-seryl-[protein] + diphosphate. It carries out the reaction L-tyrosyl-[protein] + UTP = O-(5'-uridylyl)-L-tyrosyl-[protein] + diphosphate. Nucleotidyltransferase involved in the post-translational modification of proteins. It can catalyze the addition of adenosine monophosphate (AMP) or uridine monophosphate (UMP) to a protein, resulting in modifications known as AMPylation and UMPylation. This is Protein nucleotidyltransferase YdiU from Salmonella newport (strain SL254).